Here is a 405-residue protein sequence, read N- to C-terminus: Coenzyme F420 hydrogenase subunit alpha (405 aa).

Ni(2+) is bound by residues C63, C66, C380, and C383.

Belongs to the [NiFe]/[NiFeSe] hydrogenase large subunit family. In terms of assembly, heterocomplex of the form (alpha(1)beta(1)gamma(1))(8). The cofactor is Ni(2+). Iron-sulfur cluster is required as a cofactor. It depends on FAD as a cofactor.

The catalysed reaction is oxidized coenzyme F420-(gamma-L-Glu)(n) + H2 + H(+) = reduced coenzyme F420-(gamma-L-Glu)(n). Its function is as follows. Reduces the physiological low-potential two-electron acceptor coenzyme F420, and the artificial one-electron acceptor methylviologen. The polypeptide is Coenzyme F420 hydrogenase subunit alpha (frhA) (Methanothermobacter thermautotrophicus (strain ATCC 29096 / DSM 1053 / JCM 10044 / NBRC 100330 / Delta H) (Methanobacterium thermoautotrophicum)).